A 208-amino-acid chain; its full sequence is Small ribosomal subunit protein uS2 (208 aa).

The disordered stretch occupies residues 189-208 (KPDQDLPVPPEEFETKLVQS).

The protein belongs to the universal ribosomal protein uS2 family.

The protein is Small ribosomal subunit protein uS2 (rps2) of Pyrobaculum aerophilum (strain ATCC 51768 / DSM 7523 / JCM 9630 / CIP 104966 / NBRC 100827 / IM2).